Reading from the N-terminus, the 252-residue chain is Movement protein (252 aa).

Positions 222 to 252 (YDGPYRPATTRPKSLLSSEDVKRASNKKNSS) are disordered.

Belongs to the tobamovirus movement protein family.

Transports viral genome to neighboring plant cells directly through plasmosdesmata, without any budding. The movement protein allows efficient cell to cell propagation, by bypassing the host cell wall barrier. Displays RNA-binding activity. This Bidens pilosa (Hairy beggarticks) protein is Movement protein.